The primary structure comprises 1774 residues: U3 small nucleolar RNA-associated protein 10 (1774 aa).

The segment at 1206–1226 is disordered; it reads YDKHSSAGSNDEEAGSESEAE. Positions 1215–1226 are enriched in acidic residues; the sequence is NDEEAGSESEAE. The stretch at 1734-1772 is one HEAT repeat; that stretch reads LVPIIAELLEDEDEEVEYEVRSGLVKVVESVMGEPFDRY.

This sequence belongs to the HEATR1/UTP10 family. As to quaternary structure, component of the ribosomal small subunit (SSU) processome.

Its subcellular location is the nucleus. It localises to the nucleolus. Its function is as follows. Involved in nucleolar processing of pre-18S ribosomal RNA. Involved in ribosome biosynthesis. This Kluyveromyces lactis (strain ATCC 8585 / CBS 2359 / DSM 70799 / NBRC 1267 / NRRL Y-1140 / WM37) (Yeast) protein is U3 small nucleolar RNA-associated protein 10.